The following is a 110-amino-acid chain: Phosphoribosyl-AMP cyclohydrolase (110 aa).

D80 is a binding site for Mg(2+). C81 is a binding site for Zn(2+). D82 and D84 together coordinate Mg(2+). Residues C97 and C104 each coordinate Zn(2+).

This sequence belongs to the PRA-CH family. As to quaternary structure, homodimer. It depends on Mg(2+) as a cofactor. The cofactor is Zn(2+).

The protein localises to the cytoplasm. The catalysed reaction is 1-(5-phospho-beta-D-ribosyl)-5'-AMP + H2O = 1-(5-phospho-beta-D-ribosyl)-5-[(5-phospho-beta-D-ribosylamino)methylideneamino]imidazole-4-carboxamide. It participates in amino-acid biosynthesis; L-histidine biosynthesis; L-histidine from 5-phospho-alpha-D-ribose 1-diphosphate: step 3/9. In terms of biological role, catalyzes the hydrolysis of the adenine ring of phosphoribosyl-AMP. The chain is Phosphoribosyl-AMP cyclohydrolase from Clostridium botulinum (strain Okra / Type B1).